Consider the following 132-residue polypeptide: Small ribosomal subunit protein uS8 (132 aa).

The protein belongs to the universal ribosomal protein uS8 family. Part of the 30S ribosomal subunit. Contacts proteins S5 and S12.

One of the primary rRNA binding proteins, it binds directly to 16S rRNA central domain where it helps coordinate assembly of the platform of the 30S subunit. This Sinorhizobium medicae (strain WSM419) (Ensifer medicae) protein is Small ribosomal subunit protein uS8.